The following is a 40-amino-acid chain: Submaxillary gland androgen-regulated protein 2, isoform epsilon (40 aa).

A signal peptide spans 1–20 (MKALYMVFVLWVLIGCFLRC).

Its subcellular location is the secreted. Functionally, may play a role in protection or detoxification. The chain is Submaxillary gland androgen-regulated protein 2, isoform epsilon (Smr2) from Mus musculus (Mouse).